A 1902-amino-acid chain; its full sequence is Plexin-B3 (1902 aa).

Residues 1-36 form the signal peptide; that stretch reads MLTDFLQAPVMAPWSPFSLHLLLLFLPLLPLTRVHR. The 425-residue stretch at 37-461 folds into the Sema domain; sequence FSVPNTSFNH…TAQQVDRILV (425 aa). The Extracellular portion of the chain corresponds to 37 to 1245; the sequence is FSVPNTSFNH…MMSTFPVEAQ (1209 aa). N-linked (GlcNAc...) asparagine glycosylation is present at asparagine 41. Intrachain disulfides connect cysteine 88/cysteine 97 and cysteine 122/cysteine 130. Asparagine 221 carries N-linked (GlcNAc...) asparagine glycosylation. 3 cysteine pairs are disulfide-bonded: cysteine 257/cysteine 360, cysteine 273/cysteine 305, and cysteine 323/cysteine 347. Residues 353-372 form a disordered region; it reads DSPESYPCGDEHTPSPIAGR. N-linked (GlcNAc...) asparagine glycans are attached at residues asparagine 416 and asparagine 469. The PSI 1 domain occupies 463–515; sequence ACPQFPNCTTCLQARDPLCGWCILQGRCTRRGECGRAAQPNHWLWSYEDNHCP. 5 disulfide bridges follow: cysteine 464/cysteine 481, cysteine 470/cysteine 514, cysteine 473/cysteine 490, cysteine 484/cysteine 496, and cysteine 551/cysteine 569. 2 PSI domains span residues 609–671 and 776–822; these read DCSA…EACP and DCAM…QLCP. N-linked (GlcNAc...) asparagine glycosylation is found at asparagine 791, asparagine 889, asparagine 910, asparagine 946, asparagine 1090, and asparagine 1207. IPT/TIG domains follow at residues 823 to 914, 915 to 1001, 1003 to 1134, and 1154 to 1221; these read IPSI…FTYQ, DPVL…FRYT, NPQL…FLYQ, and KPGH…QMGN. Residues 1246-1266 form a helical membrane-spanning segment; that stretch reads LGLGMGAAVLIAAVLLLTLMY. At 1267 to 1902 the chain is on the cytoplasmic side; sequence RHKSKKALRD…ALVEYKVTDL (636 aa).

This sequence belongs to the plexin family. Binds MET and MST1R. Interacts with RIT2/RIN. May form homodimers (via Sema domain). Interacts (via cytoplasmic domain) with FSCN1, ARHGDIA and RAC1. As to expression, expressed in brain (at protein level). In cerebellum, strongest expression detected in Purkinje and granular cells. Detected at very low levels in several fetal tissues, including dorsal root ganglia (DRG), heart, lung, optic bulb, brain and liver.

Its subcellular location is the cell membrane. Receptor for SEMA5A that plays a role in axon guidance, invasive growth and cell migration. Stimulates neurite outgrowth and mediates Ca(2+)/Mg(2+)-dependent cell aggregation. In glioma cells, SEMA5A stimulation of PLXNB3 results in the disassembly of F-actin stress fibers, disruption of focal adhesions and cellular collapse as well as inhibition of cell migration and invasion through ARHGDIA-mediated inactivation of RAC1. Seem to be non-essential for normal development and function of the central nervous system. The protein is Plexin-B3 (Plxnb3) of Mus musculus (Mouse).